The following is a 265-amino-acid chain: 4-hydroxy-tetrahydrodipicolinate reductase (265 aa).

9–14 (GARGKM) is an NAD(+) binding site. Lys-37 serves as a coordination point for NADP(+). Residues 99–101 (GTT) and 125–128 (APNF) contribute to the NAD(+) site. His-155 acts as the Proton donor/acceptor in catalysis. (S)-2,3,4,5-tetrahydrodipicolinate is bound at residue His-156. Catalysis depends on Lys-159, which acts as the Proton donor. Residue 165-166 (GT) participates in (S)-2,3,4,5-tetrahydrodipicolinate binding.

This sequence belongs to the DapB family.

Its subcellular location is the cytoplasm. It carries out the reaction (S)-2,3,4,5-tetrahydrodipicolinate + NAD(+) + H2O = (2S,4S)-4-hydroxy-2,3,4,5-tetrahydrodipicolinate + NADH + H(+). It catalyses the reaction (S)-2,3,4,5-tetrahydrodipicolinate + NADP(+) + H2O = (2S,4S)-4-hydroxy-2,3,4,5-tetrahydrodipicolinate + NADPH + H(+). The protein operates within amino-acid biosynthesis; L-lysine biosynthesis via DAP pathway; (S)-tetrahydrodipicolinate from L-aspartate: step 4/4. Functionally, catalyzes the conversion of 4-hydroxy-tetrahydrodipicolinate (HTPA) to tetrahydrodipicolinate. This chain is 4-hydroxy-tetrahydrodipicolinate reductase, found in Lysinibacillus sphaericus (strain C3-41).